The sequence spans 357 residues: Aurora kinase A- and ninein-interacting protein (357 aa).

The segment covering 72–93 has biased composition (polar residues); sequence TSQQGKTNGADQRSVSSHTESQ. The interval 72 to 102 is disordered; the sequence is TSQQGKTNGADQRSVSSHTESQTNKESKEDA. Positions 189 to 357 are interaction with AURKA; it reads QKEGEDSSCE…EGNQVIRHQA (169 aa). Residues 281–357 form an interaction with RBBP8/CtIP region; the sequence is KDSWSQLFTE…EGNQVIRHQA (77 aa). Ser-292 carries the post-translational modification Phosphoserine.

Belongs to the AUNIP family. In terms of assembly, interacts (via C-terminus) with AURKA (via C-terminus). Interacts (via N-terminus) with NIN; this interaction blocks NIN phosphorylation by both AURKA and GSK3B. Identified in a complex with NIN and AURKA. Interacts with RBBP8/CtIP.

It localises to the nucleus. The protein resides in the chromosome. Its subcellular location is the cytoplasm. The protein localises to the cytoskeleton. It is found in the microtubule organizing center. It localises to the centrosome. The protein resides in the spindle pole. Functionally, DNA-binding protein that accumulates at DNA double-strand breaks (DSBs) following DNA damage and promotes DNA resection and homologous recombination. Serves as a sensor of DNA damage: binds DNA with a strong preference for DNA substrates that mimic structures generated at stalled replication forks, and anchors RBBP8/CtIP to DSB sites to promote DNA end resection and ensuing homologous recombination repair. Inhibits non-homologous end joining (NHEJ). Required for the dynamic movement of AURKA at the centrosomes and spindle apparatus during the cell cycle. The protein is Aurora kinase A- and ninein-interacting protein of Bos taurus (Bovine).